The primary structure comprises 417 residues: MRDDQIFNLIEKEKLREREHIELIASENFTSLEIRQAVGSILTNKYAEGYPLNRYYGGCSFIDEIETLAISRAKELFGAKYANVQPHSGSQANMAAIMALISPGDRILGMQLSHGGHLTHGSRVNFSGIFFNTYFYGVSRDSELIDYDEVLKIAKDCRPNLIIAGASSYSREIDFKKFREIADDVSAYLLCDIAHIAGLIVAGFHNSSIDVAHLTTSTTHKTLRGPRGGIILSGKDFDKLVNFNGKEKPLFNAVNSTVFPGTQGGPLVHVIAGKAIAFKEALQESFKEYIANVIKNTKVMAEYFKSEGFRIVSGGTDNHLFLVDLSSSDLTGADAEKLLESVNITLNKNAIPFDKKSPSLASGIRIGGAAITSRGLNESDSLNVAKFIVRALKAKSDIELKQIKKEVVRFIRDFDMP.

(6S)-5,6,7,8-tetrahydrofolate is bound by residues L112 and 116-118 (GHL). The residue at position 221 (K221) is an N6-(pyridoxal phosphate)lysine. E247 serves as a coordination point for (6S)-5,6,7,8-tetrahydrofolate.

Belongs to the SHMT family. As to quaternary structure, homodimer. The cofactor is pyridoxal 5'-phosphate.

Its subcellular location is the cytoplasm. The enzyme catalyses (6R)-5,10-methylene-5,6,7,8-tetrahydrofolate + glycine + H2O = (6S)-5,6,7,8-tetrahydrofolate + L-serine. It functions in the pathway one-carbon metabolism; tetrahydrofolate interconversion. It participates in amino-acid biosynthesis; glycine biosynthesis; glycine from L-serine: step 1/1. Functionally, catalyzes the reversible interconversion of serine and glycine with tetrahydrofolate (THF) serving as the one-carbon carrier. This reaction serves as the major source of one-carbon groups required for the biosynthesis of purines, thymidylate, methionine, and other important biomolecules. Also exhibits THF-independent aldolase activity toward beta-hydroxyamino acids, producing glycine and aldehydes, via a retro-aldol mechanism. The sequence is that of Serine hydroxymethyltransferase from Borreliella burgdorferi (strain ATCC 35210 / DSM 4680 / CIP 102532 / B31) (Borrelia burgdorferi).